Reading from the N-terminus, the 116-residue chain is Spexin (116 aa).

The signal sequence occupies residues 1–26; it reads MKGPSVLAVTAVVLLLVLSALENSSG. The propeptide occupies 27–35; that stretch reads APQRLSEKR. Glutamine amide is present on Q49. 2 propeptides span residues 50 to 116 and 74 to 116; these read GRRF…LFNW and PDLE…LFNW. The disordered stretch occupies residues 52–77; it reads RFLSDQSRRKELADRPPPERRNPDLE. The span at 53 to 75 shows a compositional bias: basic and acidic residues; the sequence is FLSDQSRRKELADRPPPERRNPD.

It belongs to the spexin family.

The protein resides in the secreted. It localises to the extracellular space. The protein localises to the cytoplasmic vesicle. It is found in the secretory vesicle. Its function is as follows. Plays a role as a central modulator of cardiovascular and renal function and nociception. Also plays a role in energy metabolism and storage. Inhibits adrenocortical cell proliferation with minor stimulation on corticosteroid release. Acts as a ligand for galanin receptors GALR2 and GALR3. Intracerebroventricular administration of the peptide induces an increase in arterial blood pressure, a decrease in both heart rate and renal excretion and delayed natriuresis. Intraventricular administration of the peptide induces antinociceptive activity. Also induces contraction of muscarinic-like stomach smooth muscles. Intraperitoneal administration of the peptide induces a reduction in food consumption and body weight. Inhibits long chain fatty acid uptake into adipocytes. Functionally, intracerebroventricular administration of the peptide induces a decrease in heart rate, but no change in arterial pressure, and an increase in urine flow rate. Intraventricular administration of the peptide induces antinociceptive activity. In Mus musculus (Mouse), this protein is Spexin (Spx).